We begin with the raw amino-acid sequence, 305 residues long: Flavin-dependent thymidylate synthase (305 aa).

In terms of domain architecture, ThyX spans 50–261 (GFVRLIDYLG…PCATASFENH (212 aa)). Residues Ser-96, 119-121 (RHR), and Glu-127 each bind FAD. Residues 116–119 (QWMR), 127–131 (EVSSR), and Arg-200 contribute to the dUMP site. A ThyX motif motif is present at residues 119–129 (RHRTARISEVS). FAD is bound by residues 216–218 (DLH) and His-222. Residue Arg-227 coordinates dUMP. Arg-227 functions as the Involved in ionization of N3 of dUMP, leading to its activation in the catalytic mechanism.

Belongs to the thymidylate synthase ThyX family. In terms of assembly, homotetramer. It depends on FAD as a cofactor.

The catalysed reaction is dUMP + (6R)-5,10-methylene-5,6,7,8-tetrahydrofolate + NADPH + H(+) = dTMP + (6S)-5,6,7,8-tetrahydrofolate + NADP(+). The protein operates within pyrimidine metabolism; dTTP biosynthesis. Functionally, catalyzes the reductive methylation of 2'-deoxyuridine-5'-monophosphate (dUMP) to 2'-deoxythymidine-5'-monophosphate (dTMP) while utilizing 5,10-methylenetetrahydrofolate (mTHF) as the methyl donor, and NADPH and FADH(2) as the reductant. This is Flavin-dependent thymidylate synthase from Treponema pallidum (strain Nichols).